The following is a 161-amino-acid chain: Transcription elongation factor GreA (161 aa).

A coiled-coil region spans residues N45–A72.

It belongs to the GreA/GreB family.

Its function is as follows. Necessary for efficient RNA polymerase transcription elongation past template-encoded arresting sites. The arresting sites in DNA have the property of trapping a certain fraction of elongating RNA polymerases that pass through, resulting in locked ternary complexes. Cleavage of the nascent transcript by cleavage factors such as GreA or GreB allows the resumption of elongation from the new 3'terminus. GreA releases sequences of 2 to 3 nucleotides. The chain is Transcription elongation factor GreA from Aliarcobacter butzleri (strain RM4018) (Arcobacter butzleri).